The primary structure comprises 332 residues: Glyceraldehyde-3-phosphate dehydrogenase 2 (332 aa).

NAD(+)-binding positions include 11–12 (RI), aspartate 32, and arginine 77. D-glyceraldehyde 3-phosphate contacts are provided by residues 148 to 150 (SCT), threonine 179, 208 to 209 (TG), and arginine 231. Cysteine 149 acts as the Nucleophile in catalysis. Residue asparagine 313 participates in NAD(+) binding.

This sequence belongs to the glyceraldehyde-3-phosphate dehydrogenase family. In terms of assembly, homotetramer.

It is found in the cytoplasm. The enzyme catalyses D-glyceraldehyde 3-phosphate + phosphate + NAD(+) = (2R)-3-phospho-glyceroyl phosphate + NADH + H(+). Its pathway is carbohydrate degradation; glycolysis; pyruvate from D-glyceraldehyde 3-phosphate: step 1/5. The polypeptide is Glyceraldehyde-3-phosphate dehydrogenase 2 (Gapdh2) (Drosophila pseudoobscura pseudoobscura (Fruit fly)).